The chain runs to 550 residues: Acyl-CoA-dependent acyltransferase MAC2 (550 aa).

It belongs to the trichothecene O-acetyltransferase family.

It participates in secondary metabolite biosynthesis. In terms of biological role, acyl-CoA-dependent acyltransferase; part of the gene cluster that mediates the biosynthesis of mannosylerythritol lipids (MELs), surface-active substances that enhance the availability of water-insoluble substrates. Depending on the number of acetyl groups, mannosylerythritol lipids can be differentiated into MEL A (fully acetylated), MEL B and MEL C (monoacetylated at R-6 and R-4, respectively), and the fully deacetylated MEL D. The first step in the pathway is the generation of mannosylerythritol by the glycosyltransferase EMT1 which catalyzes the transfer of GDP-mannose to the C-4 atom of meso-erythritol. This reaction has to be stereospecific, since only mannosyl-D-erythritol is generated. The produced disaccharide is subsequently acylated with fatty acids of various lengths by the acyltransferases MAC1 and MAC2 at positions C-2 and C-3, repectively. The existence of MEL derivatives which carry an acetyl group at C-2 implies that at least MAC1 also accepts acetyl-CoA as a donor. The final step of MEL biosynthesis is the acetylation of the fully acylated mannosylerythritol lipids catalyzed by the acetyl-CoA-dependent acetyltransferase MAT1. MAT1 displays a relaxed regioselectivity and is able to transfer acetylgroups to both positions C-4 and C-6 of the mannosyl moiety. The polypeptide is Acyl-CoA-dependent acyltransferase MAC2 (Pseudozyma antarctica (strain T-34) (Yeast)).